The sequence spans 323 residues: MGEPKDSLALFLCHESESSLNEDDDETIERSDKQEPHFTTTIDDEDYVADLVLKENLRFETLPSKTTSSSDRLIAIDWILTTRTRFGFQHQTAYIAISYFDLFLHKRFIGLQKDETWAMRLLSVACLSLAAKMEERIVPGLSQYPQDHDFVFKPDVIRKTELLILSTLDWKMNLITPFHYFNYFLAKISQDNHSVSKDLVLLRSSDSLLALTKEISFTEYRQFVVAAVTTLLASSSTSSDIRLTREEIANKFGSISWWTSNENENVYLCYQRTLEIEERKHMTPPPEIAVSREPPASGSGAKRRLSFDDSDQSSPPAKRMRRL.

Disordered regions lie at residues 17–36 (ESSLNEDDDETIERSDKQEP) and 281–323 (HMTP…MRRL).

The protein belongs to the cyclin family. Cyclin D subfamily.

In Arabidopsis thaliana (Mouse-ear cress), this protein is Cyclin-D5-1 (CYCD5-1).